The sequence spans 480 residues: MKRYQMYVDGQWIDAENGKVDQVINPSTEEVLAEIQDGDQDDAERVLSVAKRAQSDWKRVPARQRAELLRKFAQEIRNNREHLAELLVSEQGKLYRVALGEVDVAASFIEYACDWARQMDGDIVQSDNVNEHIWIQKIPRGVVVAITAWNFPFALAGRKIGPALVAGNTIVVKPTSETPLATLELGYIAEKVGIPAGVLNIVTGGGASLGGALTSHRYTNMVTMTGSTPVGQQIIKASANNMAHVQLELGGKAPFIVMEDADLEQAAAAALHSRFDNCGQVCTCNERMYVHSSVYDEFMAIFMEKVQNIKVGNPMDPESDMGPKVNKRELDHMEALVAQALKEGAQLLHGGKRLTEGEFGKGFWFEPTILGNVQQSMTIVHEEAFGPILPVIKFDTFEEVIDYANDSEYGLATMICTRNMKYVHRLTHELECGEIYVNRGHGEQHQGFHNGYKLSGTGGEDGKYGFEQYLEKKTFYVNFD.

Residues 149-150, 173-176, and 226-227 contribute to the NADP(+) site; these read WN, KPTS, and GS. E248 functions as the Proton acceptor in the catalytic mechanism. L249 is a binding site for NADP(+). The Nucleophile role is filled by C282. NADP(+) is bound at residue E383.

It belongs to the aldehyde dehydrogenase family.

The catalysed reaction is 3,6-anhydro-alpha-L-galactopyranose + NADP(+) + H2O = 3,6-anhydro-L-galactonate + NADPH + 2 H(+). It carries out the reaction 3,6-anhydro-alpha-L-galactopyranose + NAD(+) + H2O = 3,6-anhydro-L-galactonate + NADH + 2 H(+). Functionally, involved in the degradation of 3,6-anhydro-L-galactose, which is the major monomeric sugar of red macroalgae. Catalyzes the oxidation of 3,6-anhydro-L-galactose (AHG) to form 3,6-anhydrogalactonate (AHGA). This Vibrio sp. (strain EJY3) protein is 3,6-anhydro-alpha-L-galactose dehydrogenase.